A 285-amino-acid polypeptide reads, in one-letter code: Bifunctional protein FolD (285 aa).

Residues 163 to 165 (GRS), Ser188, and Ala231 each bind NADP(+).

Belongs to the tetrahydrofolate dehydrogenase/cyclohydrolase family. In terms of assembly, homodimer.

It catalyses the reaction (6R)-5,10-methylene-5,6,7,8-tetrahydrofolate + NADP(+) = (6R)-5,10-methenyltetrahydrofolate + NADPH. It carries out the reaction (6R)-5,10-methenyltetrahydrofolate + H2O = (6R)-10-formyltetrahydrofolate + H(+). It participates in one-carbon metabolism; tetrahydrofolate interconversion. In terms of biological role, catalyzes the oxidation of 5,10-methylenetetrahydrofolate to 5,10-methenyltetrahydrofolate and then the hydrolysis of 5,10-methenyltetrahydrofolate to 10-formyltetrahydrofolate. In Oenococcus oeni (strain ATCC BAA-331 / PSU-1), this protein is Bifunctional protein FolD.